The primary structure comprises 460 residues: Bifunctional protein GlmU (460 aa).

Positions 1–232 (MALNVVILAA…AIEVEGANNR (232 aa)) are pyrophosphorylase. UDP-N-acetyl-alpha-D-glucosamine is bound by residues 8-11 (LAAG), Lys-22, Gln-73, 78-79 (GT), 100-102 (YGD), Gly-137, Glu-157, Asn-172, and Asn-230. Residue Asp-102 coordinates Mg(2+). Position 230 (Asn-230) interacts with Mg(2+). The linker stretch occupies residues 233 to 253 (VQLAQLERAYQAREAEKLMLA). Residues 254–460 (GANLRDPSRI…GWQRPVKIKK (207 aa)) are N-acetyltransferase. UDP-N-acetyl-alpha-D-glucosamine is bound by residues Arg-336 and Lys-354. Catalysis depends on His-366, which acts as the Proton acceptor. Residues Tyr-369 and Asn-380 each coordinate UDP-N-acetyl-alpha-D-glucosamine. Acetyl-CoA-binding positions include Ala-383, 389–390 (NY), Ser-408, Ala-426, and Arg-443.

It in the N-terminal section; belongs to the N-acetylglucosamine-1-phosphate uridyltransferase family. This sequence in the C-terminal section; belongs to the transferase hexapeptide repeat family. As to quaternary structure, homotrimer. Mg(2+) is required as a cofactor.

Its subcellular location is the cytoplasm. It carries out the reaction alpha-D-glucosamine 1-phosphate + acetyl-CoA = N-acetyl-alpha-D-glucosamine 1-phosphate + CoA + H(+). The catalysed reaction is N-acetyl-alpha-D-glucosamine 1-phosphate + UTP + H(+) = UDP-N-acetyl-alpha-D-glucosamine + diphosphate. The protein operates within nucleotide-sugar biosynthesis; UDP-N-acetyl-alpha-D-glucosamine biosynthesis; N-acetyl-alpha-D-glucosamine 1-phosphate from alpha-D-glucosamine 6-phosphate (route II): step 2/2. It participates in nucleotide-sugar biosynthesis; UDP-N-acetyl-alpha-D-glucosamine biosynthesis; UDP-N-acetyl-alpha-D-glucosamine from N-acetyl-alpha-D-glucosamine 1-phosphate: step 1/1. It functions in the pathway bacterial outer membrane biogenesis; LPS lipid A biosynthesis. Catalyzes the last two sequential reactions in the de novo biosynthetic pathway for UDP-N-acetylglucosamine (UDP-GlcNAc). The C-terminal domain catalyzes the transfer of acetyl group from acetyl coenzyme A to glucosamine-1-phosphate (GlcN-1-P) to produce N-acetylglucosamine-1-phosphate (GlcNAc-1-P), which is converted into UDP-GlcNAc by the transfer of uridine 5-monophosphate (from uridine 5-triphosphate), a reaction catalyzed by the N-terminal domain. This chain is Bifunctional protein GlmU, found in Shewanella baltica (strain OS195).